Reading from the N-terminus, the 705-residue chain is Polyribonucleotide nucleotidyltransferase (705 aa).

Residues Asp486 and Asp492 each contribute to the Mg(2+) site. One can recognise a KH domain in the interval 553 to 612 (PRIIKFKINPEKIRDVIGKGGAVIRALTEETGTTIDISDDGSVTIASISNEGGEQAKRRI). Residues 622-690 (GKIYEGTVLK…DKGRLRLSMK (69 aa)) form the S1 motif domain.

It belongs to the polyribonucleotide nucleotidyltransferase family. The cofactor is Mg(2+).

It localises to the cytoplasm. It carries out the reaction RNA(n+1) + phosphate = RNA(n) + a ribonucleoside 5'-diphosphate. Functionally, involved in mRNA degradation. Catalyzes the phosphorolysis of single-stranded polyribonucleotides processively in the 3'- to 5'-direction. This is Polyribonucleotide nucleotidyltransferase from Nitrosomonas eutropha (strain DSM 101675 / C91 / Nm57).